The chain runs to 378 residues: Outer membrane protein (378 aa).

Residues 1-22 (MRLRTALLATTLMAAAPVAANA) form the signal peptide. The OmpA-like domain occupies 258-378 (PPAPTPARTY…QNRRVEIILH (121 aa)).

It is found in the cell outer membrane. Functionally, growth enhancer. The polypeptide is Outer membrane protein (Gluconacetobacter diazotrophicus (strain ATCC 49037 / DSM 5601 / CCUG 37298 / CIP 103539 / LMG 7603 / PAl5)).